The chain runs to 122 residues: Large ribosomal subunit protein uL14 (122 aa).

The protein belongs to the universal ribosomal protein uL14 family. In terms of assembly, part of the 50S ribosomal subunit. Forms a cluster with proteins L3 and L19. In the 70S ribosome, L14 and L19 interact and together make contacts with the 16S rRNA in bridges B5 and B8.

Its function is as follows. Binds to 23S rRNA. Forms part of two intersubunit bridges in the 70S ribosome. In Burkholderia multivorans (strain ATCC 17616 / 249), this protein is Large ribosomal subunit protein uL14.